The chain runs to 198 residues: Guanylate kinase (198 aa).

The Guanylate kinase-like domain occupies 4–186 (PRPVVLSGPS…AYATLKQALS (183 aa)). 14-19 (GAGKST) is an ATP binding site. 37–51 (SHTTRNPRPGEEDGK) is a binding site for substrate. Residues R44, R137, and R148 contribute to the active site. 171–172 (ND) contributes to the ATP binding site.

It belongs to the guanylate kinase family. As to quaternary structure, monomer. Interacts with RD3. As to expression, widely expressed. In retina is expressed in inner segment, outer nuclear layer, outer plexiform layer, inner plexiform layer, and ganglion cell layer (at protein level).

Its subcellular location is the photoreceptor inner segment. It is found in the cytoplasm. The protein localises to the cytosol. The protein resides in the mitochondrion. The catalysed reaction is GMP + ATP = GDP + ADP. Catalyzes the phosphorylation of GMP to GDP. Essential enzyme for recycling GMP and indirectly, cyclic GMP (cGMP). Involved in the cGMP metabolism in photoreceptors. The sequence is that of Guanylate kinase from Mus musculus (Mouse).